The sequence spans 562 residues: Probable tRNA (uracil-O(2)-)-methyltransferase (562 aa).

Residues valine 520–asparagine 546 form a disordered region. Residues asparagine 535–histidine 562 form a C3H1-type zinc finger.

Belongs to the TRM44 family.

Its subcellular location is the cytoplasm. It catalyses the reaction uridine(44) in tRNA(Ser) + S-adenosyl-L-methionine = 2'-O-methyluridine(44) in tRNA(Ser) + S-adenosyl-L-homocysteine + H(+). Functionally, probable adenosyl-L-methionine (AdoMet)-dependent tRNA (uracil-O(2)-)-methyltransferase. In Caenorhabditis briggsae, this protein is Probable tRNA (uracil-O(2)-)-methyltransferase.